Consider the following 327-residue polypeptide: ATP-dependent 6-phosphofructokinase (327 aa).

Gly12 is an ATP binding site. Residues 22-26 (RGVVR) and 55-60 (RYSVSD) contribute to the ADP site. ATP-binding positions include 73 to 74 (RF) and 103 to 106 (GDGS). Asp104 contacts Mg(2+). 127–129 (TID) provides a ligand contact to substrate. The Proton acceptor role is filled by Asp129. An ADP-binding site is contributed by Arg156. Residues Arg164 and 171–173 (MGR) each bind substrate. Residues 187–189 (GCE), Lys213, and 215–217 (KKH) contribute to the ADP site. Residues Glu224, Arg245, and 251 to 254 (HIQR) contribute to the substrate site.

The protein belongs to the phosphofructokinase type A (PFKA) family. ATP-dependent PFK group I subfamily. Prokaryotic clade 'B1' sub-subfamily. Homotetramer. It depends on Mg(2+) as a cofactor.

The protein resides in the cytoplasm. The enzyme catalyses beta-D-fructose 6-phosphate + ATP = beta-D-fructose 1,6-bisphosphate + ADP + H(+). It participates in carbohydrate degradation; glycolysis; D-glyceraldehyde 3-phosphate and glycerone phosphate from D-glucose: step 3/4. Its activity is regulated as follows. Allosterically activated by ADP and other diphosphonucleosides, and allosterically inhibited by phosphoenolpyruvate. In terms of biological role, catalyzes the phosphorylation of D-fructose 6-phosphate to fructose 1,6-bisphosphate by ATP, the first committing step of glycolysis. This chain is ATP-dependent 6-phosphofructokinase, found in Yersinia pseudotuberculosis serotype O:1b (strain IP 31758).